The following is a 144-amino-acid chain: Large ribosomal subunit protein uL16 (144 aa).

This sequence belongs to the universal ribosomal protein uL16 family. In terms of assembly, part of the 50S ribosomal subunit.

Its function is as follows. Binds 23S rRNA and is also seen to make contacts with the A and possibly P site tRNAs. This chain is Large ribosomal subunit protein uL16, found in Caldanaerobacter subterraneus subsp. tengcongensis (strain DSM 15242 / JCM 11007 / NBRC 100824 / MB4) (Thermoanaerobacter tengcongensis).